Reading from the N-terminus, the 71-residue chain is UPF0346 protein BCB4264_A2283 (71 aa).

The protein belongs to the UPF0346 family.

This Bacillus cereus (strain B4264) protein is UPF0346 protein BCB4264_A2283.